The primary structure comprises 170 residues: Myelin-associated oligodendrocyte basic protein (170 aa).

The tract at residues 69 to 170 (SRRATSPQKP…GSPTRAPRFW (102 aa)) is disordered. Low complexity predominate over residues 82–92 (PAASPVVVRAP). Residues Ser85, Ser98, and Ser107 each carry the phosphoserine modification. Repeat 1 spans residues 93-101 (PAKPKSPPR). The span at 93-114 (PAKPKSPPRPAKPRSPPIPAKP) shows a compositional bias: pro residues. Positions 93-119 (PAKPKSPPRPAKPRSPPIPAKPRSPSR) are 3 X 9 AA approximate tandem repeats. A 2; half-length repeat occupies 105 to 110 (PRSPPI). Copy 3 of the repeat occupies 111-119 (PAKPRSPSR). A compositionally biased stretch (basic and acidic residues) spans 118 to 130 (SRTERQPRPRPEV). A compositionally biased stretch (low complexity) spans 138 to 151 (KPPQKSKQPARSSP).

In terms of tissue distribution, expressed predominantly in oligodendrocytes, in CNS myelin of the cerebrum and spinal cord. No expression seen in sciatic nerve.

It is found in the cytoplasm. The protein resides in the perinuclear region. In terms of biological role, may play a role in compacting or stabilizing the myelin sheath, possibly by binding the negatively charged acidic phospholipids of the cytoplasmic membrane. The protein is Myelin-associated oligodendrocyte basic protein (Mobp) of Rattus norvegicus (Rat).